A 237-amino-acid chain; its full sequence is Carbonyl reductase family member 4 (237 aa).

Residues 11 to 14, 34 to 35, D57, and 84 to 86 contribute to the NADP(+) site; these read SRGI, RN, and AAG. S135 is a substrate binding site. NADP(+)-binding positions include Y148, K152, and 181 to 183; that span reads IHT. The active-site Proton acceptor is the Y148.

The protein belongs to the short-chain dehydrogenases/reductases (SDR) family. In terms of assembly, homotetramer (in vitro). Heterotetramer with HSD17B8; contains two molecules each of HSD17B8 and CBR4.

It is found in the mitochondrion matrix. It participates in lipid metabolism; fatty acid biosynthesis. In terms of biological role, the heterotetramer with HSD17B8 has NADH-dependent 3-ketoacyl-acyl carrier protein reductase activity, and thereby plays a role in mitochondrial fatty acid biosynthesis. Within the heterotetramer, HSD17B8 binds NADH; CBR4 binds NADPD. The homotetramer has NADPH-dependent quinone reductase activity. Both homotetramer and the heterotetramer have broad in vitro substrate specificity and can reduce 9,10-phenanthrenequinone, 1,4-benzoquinone and various other o-quinones and p-quinones. This chain is Carbonyl reductase family member 4 (cbr4), found in Danio rerio (Zebrafish).